The primary structure comprises 671 residues: Probable serine/threonine-protein kinase DDB_G0286627 (671 aa).

Residues 31–283 (WVIERQLSKG…SHQLIKHPFF (253 aa)) form the Protein kinase domain. Residues 37 to 45 (LSKGSFGQV) and Lys61 each bind ATP. The active-site Proton acceptor is the Asp148. A helical transmembrane segment spans residues 369 to 389 (FKIIYLFLILLFLMTILVNLN). A disordered region spans residues 410–523 (PESNPIKKPS…PPVTETPKPT (114 aa)). The span at 427-490 (NQYSEGSQSS…PTDSSTTDPP (64 aa)) shows a compositional bias: low complexity. Pro residues predominate over residues 491 to 513 (VTDPPITDPPITDPPVTDPPITE).

The protein belongs to the protein kinase superfamily. STE Ser/Thr protein kinase family. The cofactor is Mg(2+).

It is found in the membrane. The catalysed reaction is L-seryl-[protein] + ATP = O-phospho-L-seryl-[protein] + ADP + H(+). It carries out the reaction L-threonyl-[protein] + ATP = O-phospho-L-threonyl-[protein] + ADP + H(+). In Dictyostelium discoideum (Social amoeba), this protein is Probable serine/threonine-protein kinase DDB_G0286627.